The chain runs to 459 residues: Bifunctional protein GlmU (459 aa).

The interval 1-230 (MSNRFAVILA…FDETLGVNDR (230 aa)) is pyrophosphorylase. UDP-N-acetyl-alpha-D-glucosamine contacts are provided by residues 9-12 (LAAG), Lys23, Gln73, and 78-79 (GT). Asp103 is a binding site for Mg(2+). Residues Gly140, Glu155, Asn170, and Asn228 each contribute to the UDP-N-acetyl-alpha-D-glucosamine site. Asn228 is a binding site for Mg(2+). The tract at residues 231-251 (VALSQAEIIMKNRINRKNMVN) is linker. An N-acetyltransferase region spans residues 252 to 459 (GVTIIDPSNT…VDQLLNKKKS (208 aa)). 2 residues coordinate UDP-N-acetyl-alpha-D-glucosamine: Arg333 and Lys351. His363 (proton acceptor) is an active-site residue. UDP-N-acetyl-alpha-D-glucosamine contacts are provided by Tyr366 and Asn377. Acetyl-CoA is bound by residues 386–387 (NY), Ala423, and Arg440.

The protein in the N-terminal section; belongs to the N-acetylglucosamine-1-phosphate uridyltransferase family. It in the C-terminal section; belongs to the transferase hexapeptide repeat family. As to quaternary structure, homotrimer. Requires Mg(2+) as cofactor.

Its subcellular location is the cytoplasm. It catalyses the reaction alpha-D-glucosamine 1-phosphate + acetyl-CoA = N-acetyl-alpha-D-glucosamine 1-phosphate + CoA + H(+). It carries out the reaction N-acetyl-alpha-D-glucosamine 1-phosphate + UTP + H(+) = UDP-N-acetyl-alpha-D-glucosamine + diphosphate. Its pathway is nucleotide-sugar biosynthesis; UDP-N-acetyl-alpha-D-glucosamine biosynthesis; N-acetyl-alpha-D-glucosamine 1-phosphate from alpha-D-glucosamine 6-phosphate (route II): step 2/2. The protein operates within nucleotide-sugar biosynthesis; UDP-N-acetyl-alpha-D-glucosamine biosynthesis; UDP-N-acetyl-alpha-D-glucosamine from N-acetyl-alpha-D-glucosamine 1-phosphate: step 1/1. It participates in bacterial outer membrane biogenesis; LPS lipid A biosynthesis. Functionally, catalyzes the last two sequential reactions in the de novo biosynthetic pathway for UDP-N-acetylglucosamine (UDP-GlcNAc). The C-terminal domain catalyzes the transfer of acetyl group from acetyl coenzyme A to glucosamine-1-phosphate (GlcN-1-P) to produce N-acetylglucosamine-1-phosphate (GlcNAc-1-P), which is converted into UDP-GlcNAc by the transfer of uridine 5-monophosphate (from uridine 5-triphosphate), a reaction catalyzed by the N-terminal domain. The sequence is that of Bifunctional protein GlmU from Bacillus cereus (strain AH187).